A 305-amino-acid chain; its full sequence is Acetyl-coenzyme A carboxylase carboxyl transferase subunit beta (305 aa).

The CoA carboxyltransferase N-terminal domain maps to 25–293 (LWVQCPACQQ…LPKVESVASL (269 aa)). The Zn(2+) site is built by Cys29, Cys32, Cys48, and Cys51. The segment at 29-51 (CPACQQMIFARDLEKNQRVCTHC) adopts a C4-type zinc-finger fold.

Belongs to the AccD/PCCB family. As to quaternary structure, acetyl-CoA carboxylase is a heterohexamer composed of biotin carboxyl carrier protein (AccB), biotin carboxylase (AccC) and two subunits each of ACCase subunit alpha (AccA) and ACCase subunit beta (AccD). Zn(2+) is required as a cofactor.

The protein resides in the cytoplasm. It carries out the reaction N(6)-carboxybiotinyl-L-lysyl-[protein] + acetyl-CoA = N(6)-biotinyl-L-lysyl-[protein] + malonyl-CoA. Its pathway is lipid metabolism; malonyl-CoA biosynthesis; malonyl-CoA from acetyl-CoA: step 1/1. Component of the acetyl coenzyme A carboxylase (ACC) complex. Biotin carboxylase (BC) catalyzes the carboxylation of biotin on its carrier protein (BCCP) and then the CO(2) group is transferred by the transcarboxylase to acetyl-CoA to form malonyl-CoA. This Granulibacter bethesdensis (strain ATCC BAA-1260 / CGDNIH1) protein is Acetyl-coenzyme A carboxylase carboxyl transferase subunit beta.